The primary structure comprises 389 residues: Homoserine O-acetyltransferase (389 aa).

The interval Met1–Leu21 is disordered. A compositionally biased stretch (polar residues) spans Lys8–Ser18. Residues Asn56–Asp366 enclose the AB hydrolase-1 domain. The active-site Nucleophile is Ser161. Position 231 (Arg231) interacts with substrate. Residues Asp327 and His360 contribute to the active site. A substrate-binding site is contributed by Asp361.

It belongs to the AB hydrolase superfamily. MetX family. In terms of assembly, homodimer.

The protein localises to the cytoplasm. The enzyme catalyses L-homoserine + acetyl-CoA = O-acetyl-L-homoserine + CoA. Its pathway is amino-acid biosynthesis; L-methionine biosynthesis via de novo pathway; O-acetyl-L-homoserine from L-homoserine: step 1/1. Transfers an acetyl group from acetyl-CoA to L-homoserine, forming acetyl-L-homoserine. This Mesorhizobium japonicum (strain LMG 29417 / CECT 9101 / MAFF 303099) (Mesorhizobium loti (strain MAFF 303099)) protein is Homoserine O-acetyltransferase.